A 114-amino-acid chain; its full sequence is Large ribosomal subunit protein bL20 (114 aa).

The protein belongs to the bacterial ribosomal protein bL20 family.

Its function is as follows. Binds directly to 23S ribosomal RNA and is necessary for the in vitro assembly process of the 50S ribosomal subunit. It is not involved in the protein synthesizing functions of that subunit. This chain is Large ribosomal subunit protein bL20, found in Anaeromyxobacter dehalogenans (strain 2CP-C).